The following is a 478-amino-acid chain: Bifunctional protein HldE (478 aa).

The segment at 1-318 (MKVTLPDFRQ…ENAIRGRADT (318 aa)) is ribokinase. Position 195-198 (195-198 (NLSE)) interacts with ATP. Asp264 is a catalytic residue. The tract at residues 344-478 (MTNGCFDILH…NMIKASTSQS (135 aa)) is cytidylyltransferase.

The protein in the N-terminal section; belongs to the carbohydrate kinase PfkB family. It in the C-terminal section; belongs to the cytidylyltransferase family. As to quaternary structure, homodimer.

The enzyme catalyses D-glycero-beta-D-manno-heptose 7-phosphate + ATP = D-glycero-beta-D-manno-heptose 1,7-bisphosphate + ADP + H(+). It carries out the reaction D-glycero-beta-D-manno-heptose 1-phosphate + ATP + H(+) = ADP-D-glycero-beta-D-manno-heptose + diphosphate. Its pathway is nucleotide-sugar biosynthesis; ADP-L-glycero-beta-D-manno-heptose biosynthesis; ADP-L-glycero-beta-D-manno-heptose from D-glycero-beta-D-manno-heptose 7-phosphate: step 1/4. It functions in the pathway nucleotide-sugar biosynthesis; ADP-L-glycero-beta-D-manno-heptose biosynthesis; ADP-L-glycero-beta-D-manno-heptose from D-glycero-beta-D-manno-heptose 7-phosphate: step 3/4. Its function is as follows. Catalyzes the phosphorylation of D-glycero-D-manno-heptose 7-phosphate at the C-1 position to selectively form D-glycero-beta-D-manno-heptose-1,7-bisphosphate. Catalyzes the ADP transfer from ATP to D-glycero-beta-D-manno-heptose 1-phosphate, yielding ADP-D-glycero-beta-D-manno-heptose. This is Bifunctional protein HldE from Pectobacterium atrosepticum (strain SCRI 1043 / ATCC BAA-672) (Erwinia carotovora subsp. atroseptica).